Consider the following 89-residue polypeptide: MSITAERKQALIKEYATKEGDTGSPEVQVAVLSERIANLTEHFKGHKNDNHSRRGLLKLVSQRRRLLDYVKGVDHARYQALITRLGLRR.

The protein belongs to the universal ribosomal protein uS15 family. In terms of assembly, part of the 30S ribosomal subunit. Forms a bridge to the 50S subunit in the 70S ribosome, contacting the 23S rRNA.

In terms of biological role, one of the primary rRNA binding proteins, it binds directly to 16S rRNA where it helps nucleate assembly of the platform of the 30S subunit by binding and bridging several RNA helices of the 16S rRNA. Forms an intersubunit bridge (bridge B4) with the 23S rRNA of the 50S subunit in the ribosome. In Brucella abortus (strain S19), this protein is Small ribosomal subunit protein uS15.